We begin with the raw amino-acid sequence, 130 residues long: Probable 4-amino-4-deoxy-L-arabinose-phosphoundecaprenol flippase subunit ArnF (130 aa).

Residues 1 to 4 (MRGY) are Cytoplasmic-facing. A helical membrane pass occupies residues 5–25 (AWGAASVLLVTLAQLLMKWGM). Over 26-47 (AQIPLMSFADVTLNLFMQYWLP) the chain is Periplasmic. The chain crosses the membrane as a helical span at residues 48–68 (LVVVSGGIFGYALSMLCWFFA). Residues 69 to 77 (LHHLPLNRA) lie on the Cytoplasmic side of the membrane. A helical transmembrane segment spans residues 78–98 (YPLLSVSYALVYLAAVILPWF). Position 99 (N99) is a topological domain, periplasmic. Residues 100-120 (ESATLLKTLGTLFILFGVWLI) form a helical membrane-spanning segment. Residues 121-130 (NSQAKVKTPQ) lie on the Cytoplasmic side of the membrane.

It belongs to the ArnF family. As to quaternary structure, heterodimer of ArnE and ArnF.

It is found in the cell inner membrane. Its pathway is bacterial outer membrane biogenesis; lipopolysaccharide biosynthesis. In terms of biological role, translocates 4-amino-4-deoxy-L-arabinose-phosphoundecaprenol (alpha-L-Ara4N-phosphoundecaprenol) from the cytoplasmic to the periplasmic side of the inner membrane. The sequence is that of Probable 4-amino-4-deoxy-L-arabinose-phosphoundecaprenol flippase subunit ArnF from Serratia proteamaculans (strain 568).